The chain runs to 122 residues: UPF0231 protein VIBHAR_03438 (122 aa).

This sequence belongs to the UPF0231 family.

The sequence is that of UPF0231 protein VIBHAR_03438 from Vibrio campbellii (strain ATCC BAA-1116).